The sequence spans 126 residues: Small ribosomal subunit protein uS12 (126 aa).

The interval 1-23 (MPTISQLVRKGRKTVASKSTAPA) is disordered. Asp-89 carries the post-translational modification 3-methylthioaspartic acid.

This sequence belongs to the universal ribosomal protein uS12 family. As to quaternary structure, part of the 30S ribosomal subunit. Contacts proteins S8 and S17. May interact with IF1 in the 30S initiation complex.

Functionally, with S4 and S5 plays an important role in translational accuracy. Interacts with and stabilizes bases of the 16S rRNA that are involved in tRNA selection in the A site and with the mRNA backbone. Located at the interface of the 30S and 50S subunits, it traverses the body of the 30S subunit contacting proteins on the other side and probably holding the rRNA structure together. The combined cluster of proteins S8, S12 and S17 appears to hold together the shoulder and platform of the 30S subunit. The chain is Small ribosomal subunit protein uS12 from Clostridium perfringens (strain ATCC 13124 / DSM 756 / JCM 1290 / NCIMB 6125 / NCTC 8237 / Type A).